A 208-amino-acid polypeptide reads, in one-letter code: Uracil phosphoribosyltransferase (208 aa).

5-phospho-alpha-D-ribose 1-diphosphate-binding positions include R78, R103, and D130–S138. Uracil contacts are provided by residues I193 and G198–A200. Position 199 (D199) interacts with 5-phospho-alpha-D-ribose 1-diphosphate.

The protein belongs to the UPRTase family. Mg(2+) is required as a cofactor.

The enzyme catalyses UMP + diphosphate = 5-phospho-alpha-D-ribose 1-diphosphate + uracil. Its pathway is pyrimidine metabolism; UMP biosynthesis via salvage pathway; UMP from uracil: step 1/1. With respect to regulation, allosterically activated by GTP. Functionally, catalyzes the conversion of uracil and 5-phospho-alpha-D-ribose 1-diphosphate (PRPP) to UMP and diphosphate. This Photorhabdus laumondii subsp. laumondii (strain DSM 15139 / CIP 105565 / TT01) (Photorhabdus luminescens subsp. laumondii) protein is Uracil phosphoribosyltransferase.